Consider the following 332-residue polypeptide: Ferredoxin--NADP reductase 2 (332 aa).

Residues Glu37, Gln45, Tyr50, Val90, Phe124, Asp285, and Thr326 each contribute to the FAD site.

Belongs to the ferredoxin--NADP reductase type 2 family. Homodimer. FAD serves as cofactor.

It catalyses the reaction 2 reduced [2Fe-2S]-[ferredoxin] + NADP(+) + H(+) = 2 oxidized [2Fe-2S]-[ferredoxin] + NADPH. The sequence is that of Ferredoxin--NADP reductase 2 from Bacillus pumilus (strain SAFR-032).